Consider the following 167-residue polypeptide: 2-C-methyl-D-erythritol 2,4-cyclodiphosphate synthase (167 aa).

A divalent metal cation is bound by residues aspartate 8 and histidine 10. 4-CDP-2-C-methyl-D-erythritol 2-phosphate contacts are provided by residues 8 to 10 (DIH) and 34 to 35 (HS). Position 42 (histidine 42) interacts with a divalent metal cation. 4-CDP-2-C-methyl-D-erythritol 2-phosphate contacts are provided by residues 56-58 (DIG) and arginine 142.

This sequence belongs to the IspF family. In terms of assembly, homotrimer. It depends on a divalent metal cation as a cofactor.

It catalyses the reaction 4-CDP-2-C-methyl-D-erythritol 2-phosphate = 2-C-methyl-D-erythritol 2,4-cyclic diphosphate + CMP. Its pathway is isoprenoid biosynthesis; isopentenyl diphosphate biosynthesis via DXP pathway; isopentenyl diphosphate from 1-deoxy-D-xylulose 5-phosphate: step 4/6. Involved in the biosynthesis of isopentenyl diphosphate (IPP) and dimethylallyl diphosphate (DMAPP), two major building blocks of isoprenoid compounds. Catalyzes the conversion of 4-diphosphocytidyl-2-C-methyl-D-erythritol 2-phosphate (CDP-ME2P) to 2-C-methyl-D-erythritol 2,4-cyclodiphosphate (ME-CPP) with a corresponding release of cytidine 5-monophosphate (CMP). This chain is 2-C-methyl-D-erythritol 2,4-cyclodiphosphate synthase, found in Buchnera aphidicola subsp. Schizaphis graminum (strain Sg).